Here is a 211-residue protein sequence, read N- to C-terminus: Large ribosomal subunit protein uL3 (211 aa).

Q151 is subject to N5-methylglutamine.

This sequence belongs to the universal ribosomal protein uL3 family. In terms of assembly, part of the 50S ribosomal subunit. Forms a cluster with proteins L14 and L19. Methylated by PrmB.

Its function is as follows. One of the primary rRNA binding proteins, it binds directly near the 3'-end of the 23S rRNA, where it nucleates assembly of the 50S subunit. The protein is Large ribosomal subunit protein uL3 of Francisella tularensis subsp. tularensis (strain FSC 198).